Here is a 187-residue protein sequence, read N- to C-terminus: ECF RNA polymerase sigma factor SigW (187 aa).

The sigma-70 factor domain-2 stretch occupies residues 3-95 (MMIKKRIKQV…RKKKPDYYLD (93 aa)). A Polymerase core binding motif is present at residues 47 to 50 (DIAQ). Residues 125 to 187 (ELSNTIQQKI…EALRKQLRDL (63 aa)) form a sigma-70 factor domain-4 region. Residues 166–184 (VGTVKTRIHRGREALRKQL) constitute a DNA-binding region (H-T-H motif).

The protein belongs to the sigma-70 factor family. ECF subfamily. As to quaternary structure, interacts transiently with the RNA polymerase catalytic core formed by RpoA, RpoB, RpoC and RpoZ (2 alpha, 1 beta, 1 beta' and 1 omega subunit) to form the RNA polymerase holoenzyme that can initiate transcription. Forms a heterodimer with cognate anti-sigma factor RsiW, which prevents it from binding to the -10 and -35 promoter elements.

With respect to regulation, extracytoplasmic function (ECF) sigma factors are held in an inactive form by a cognate anti-sigma factor (RsiW for this protein) until released by regulated membrane proteolysis (RIP). RIP occurs when an extracytoplasmic signal (envelope stress) triggers a concerted proteolytic cascade to transmit information and elicit cellular responses. The anti-sigma factor RsiW is a membrane protein, binding sigma-W in the cytoplasm. RsiW is first cut extracytoplasmically (site-1 protease, S1P, by PrsW), then within the membrane itself (site-2 protease, S2P, by RasP), while cytoplasmic proteases (predominantly ClpX-ClpP) finish degrading the regulatory protein, liberating sigma-W. In terms of biological role, sigma factors are initiation factors that promote the attachment of RNA polymerase (RNAP) to specific initiation sites and are then released. Sigma-W controls genes involved in response to cell envelope stress such as antimicrobial peptides, alkaline pH, transport processes and detoxification. The sequence is that of ECF RNA polymerase sigma factor SigW (sigW) from Bacillus subtilis (strain 168).